Here is a 324-residue protein sequence, read N- to C-terminus: tRNA dimethylallyltransferase (324 aa).

18 to 25 lines the ATP pocket; that stretch reads GPTAVGKT. 20–25 lines the substrate pocket; the sequence is TAVGKT. The tract at residues 43–46 is interaction with substrate tRNA; sequence DSRQ.

This sequence belongs to the IPP transferase family. In terms of assembly, monomer. Mg(2+) is required as a cofactor.

It catalyses the reaction adenosine(37) in tRNA + dimethylallyl diphosphate = N(6)-dimethylallyladenosine(37) in tRNA + diphosphate. In terms of biological role, catalyzes the transfer of a dimethylallyl group onto the adenine at position 37 in tRNAs that read codons beginning with uridine, leading to the formation of N6-(dimethylallyl)adenosine (i(6)A). In Salinibacter ruber (strain DSM 13855 / M31), this protein is tRNA dimethylallyltransferase.